A 371-amino-acid chain; its full sequence is Cytochrome b (371 aa).

4 helical membrane passes run 25–45 (FGSM…FLAV), 69–90 (WMMQ…YIHI), 105–125 (WLSG…GYVL), and 170–190 (FFAL…LHIM). Histidine 75 and histidine 89 together coordinate heme b. Residues histidine 174 and histidine 188 each contribute to the heme b site. Residue histidine 193 participates in a ubiquinone binding. 4 helical membrane-spanning segments follow: residues 218–238 (YKDL…VSFL), 280–300 (LGGA…PFTH), 312–332 (IMQL…WAAT), and 339–358 (FTMI…IMNP).

The protein belongs to the cytochrome b family. As to quaternary structure, the cytochrome bc1 complex contains 3 respiratory subunits (MT-CYB, CYC1 and UQCRFS1), 2 core proteins (UQCRC1 and UQCRC2) and probably 6 low-molecular weight proteins. The cofactor is heme b.

Its subcellular location is the mitochondrion inner membrane. Component of the ubiquinol-cytochrome c reductase complex (complex III or cytochrome b-c1 complex) that is part of the mitochondrial respiratory chain. The b-c1 complex mediates electron transfer from ubiquinol to cytochrome c. Contributes to the generation of a proton gradient across the mitochondrial membrane that is then used for ATP synthesis. This chain is Cytochrome b (MT-CYB), found in Eryx miliaris (Desert sand boa).